The sequence spans 90 residues: Iron oxidase (90 aa).

The segment at residues 1-37 (MSEKDKMITRRDALRNIAVVVGSVATTTMMGVGVADA) is a signal peptide (tat-type signal). Positions 57, 60, 69, and 82 each coordinate [4Fe-4S] cluster.

It belongs to the high-potential iron-sulfur protein (HiPIP) family. In terms of assembly, homomultimer. Predicted to be exported by the Tat system. The position of the signal peptide cleavage has been experimentally proven.

Its subcellular location is the periplasm. In terms of biological role, catalyzes the oxidation of Fe(2+) to Fe(3+) coupled to cytochrome c552 reduction. In Acidithiobacillus ferrooxidans (Thiobacillus ferrooxidans), this protein is Iron oxidase (iro).